Reading from the N-terminus, the 613-residue chain is Proton myo-inositol cotransporter hmit-1.2 (613 aa).

Topologically, residues 1-21 (MVAVEFKVSESGRPRPEKNPK) are cytoplasmic. A helical transmembrane segment spans residues 22–42 (LGFFVYLLGSAAIIGGFLFGY). Residues 43 to 69 (DTSVVSAAMLYVPEAPGLKPMGTVWKE) lie on the Extracellular side of the membrane. Residues 70–90 (VIVSITPGMAAVGAWFSGAGS) traverse the membrane as a helical segment. Residues 91–96 (DRYGRK) lie on the Cytoplasmic side of the membrane. Residues 97-117 (PIIIGSTLIFVCGAVICAVAW) traverse the membrane as a helical segment. Topologically, residues 118–119 (TK) are extracellular. The chain crosses the membrane as a helical span at residues 120-140 (IVMLIGRIFLGVGIGFASMVV). At 141 to 157 (PVYLGEASPTHVRGTLV) the chain is on the cytoplasmic side. A helical membrane pass occupies residues 158 to 178 (SAFAMMISFGQVVANIMGGVF). Topologically, residues 179 to 189 (SYWEPYTIGWR) are extracellular. Residues 190–210 (LMFAFAGIPALIQFVCFIFLP) traverse the membrane as a helical segment. Residues 211 to 279 (ETPRWLYENG…RILKTPHVLK (69 aa)) are Cytoplasmic-facing. Residues 280-300 (ACFIGSMLQAFQQLAGINTIL) traverse the membrane as a helical segment. The Extracellular portion of the chain corresponds to 301–317 (YYTADIIRSAGIENYHT). Residues 318–338 (IIWISVILSICNLIGPFAPMF) traverse the membrane as a helical segment. The Cytoplasmic portion of the chain corresponds to 339-347 (FIEKLGRRK). A helical membrane pass occupies residues 348–368 (LFLFSCAGVVVSLVLIGVSFL). Topologically, residues 369–472 (LVGNDSAPNF…QKHHCTTSYT (104 aa)) are extracellular. Asparagine 372, asparagine 451, and asparagine 456 each carry an N-linked (GlcNAc...) asparagine glycan. A helical transmembrane segment spans residues 473–493 (ILPIVMMGVYLLTFSCGFTSL). At 494-515 (PWVLNSEFYPMWARSTCVSIST) the chain is on the cytoplasmic side. The chain crosses the membrane as a helical span at residues 516–536 (LSNWVFNLIIALTYLSLTHAI). Residues 537–539 (TKY) are Extracellular-facing. Residues 540 to 560 (GAFWLYAIFTIIAFIFIYFLV) traverse the membrane as a helical segment. The Cytoplasmic segment spans residues 561 to 613 (PETTGYSIDEVEMLFMNKRQRNIAMQARQAKLDAASDKDKNSSTSLSTETITM). Positions 594-613 (AASDKDKNSSTSLSTETITM) are disordered. Positions 602-613 (SSTSLSTETITM) are enriched in polar residues.

The protein belongs to the major facilitator superfamily. Sugar transporter (TC 2.A.1.1) family. Expressed in the excretory canal cell and in pairs of amphid and sheath glia.

It localises to the cell membrane. Its subcellular location is the perikaryon. The enzyme catalyses myo-inositol(out) + H(+)(out) = myo-inositol(in) + H(+)(in). Its function is as follows. H(+)-myo-inositol cotransporter. Probably by promoting the transport of myo-inositol regulates intracellular osmosis in response to hyperosmotic stress. The protein is Proton myo-inositol cotransporter hmit-1.2 of Caenorhabditis elegans.